We begin with the raw amino-acid sequence, 115 residues long: Superoxide reductase (115 aa).

Fe cation contacts are provided by Glu14, His16, His41, His47, Cys102, and His105.

It belongs to the desulfoferrodoxin family. Homotetramer. Fe cation serves as cofactor.

It catalyses the reaction reduced [rubredoxin] + superoxide + 2 H(+) = oxidized [rubredoxin] + H2O2. Uses electrons from reduced NADP, by way of rubredoxin and an oxidoreductase, to catalyze the reduction of superoxide to hydrogen peroxide. This Thermococcus kodakarensis (strain ATCC BAA-918 / JCM 12380 / KOD1) (Pyrococcus kodakaraensis (strain KOD1)) protein is Superoxide reductase (sorA).